A 660-amino-acid chain; its full sequence is DNA mismatch repair protein MutL (660 aa).

The interval 414–433 (SSVKHASRPQNTFTETDHPN) is disordered.

It belongs to the DNA mismatch repair MutL/HexB family.

This protein is involved in the repair of mismatches in DNA. It is required for dam-dependent methyl-directed DNA mismatch repair. May act as a 'molecular matchmaker', a protein that promotes the formation of a stable complex between two or more DNA-binding proteins in an ATP-dependent manner without itself being part of a final effector complex. The protein is DNA mismatch repair protein MutL of Streptococcus pyogenes serotype M6 (strain ATCC BAA-946 / MGAS10394).